The chain runs to 404 residues: Phosphopentomutase (404 aa).

The Mn(2+) site is built by D10, D303, H308, D344, H345, and H356.

This sequence belongs to the phosphopentomutase family. Mn(2+) serves as cofactor.

Its subcellular location is the cytoplasm. The enzyme catalyses 2-deoxy-alpha-D-ribose 1-phosphate = 2-deoxy-D-ribose 5-phosphate. It carries out the reaction alpha-D-ribose 1-phosphate = D-ribose 5-phosphate. The protein operates within carbohydrate degradation; 2-deoxy-D-ribose 1-phosphate degradation; D-glyceraldehyde 3-phosphate and acetaldehyde from 2-deoxy-alpha-D-ribose 1-phosphate: step 1/2. Its function is as follows. Isomerase that catalyzes the conversion of deoxy-ribose 1-phosphate (dRib-1-P) and ribose 1-phosphate (Rib-1-P) to deoxy-ribose 5-phosphate (dRib-5-P) and ribose 5-phosphate (Rib-5-P), respectively. This Shewanella baltica (strain OS223) protein is Phosphopentomutase.